Consider the following 511-residue polypeptide: Glucose-1-phosphate adenylyltransferase large subunit 1, chloroplastic/amyloplastic (511 aa).

The N-terminal 58 residues, 1–58 (MAAMDLRVAAPASVAAAARCGTSLARPWPARAVGGGGGGGGRGRRLSVRTSVATTEAA), are a transit peptide targeting the chloroplast.

The protein belongs to the bacterial/plant glucose-1-phosphate adenylyltransferase family. As to quaternary structure, heterotetramer composed of two small and two large subunits. Expressed in leaves and stems.

Its subcellular location is the plastid. It localises to the chloroplast. The protein localises to the amyloplast. It catalyses the reaction alpha-D-glucose 1-phosphate + ATP + H(+) = ADP-alpha-D-glucose + diphosphate. The protein operates within glycan biosynthesis; starch biosynthesis. Activated by 3'phosphoglycerate, inhibited by orthophosphate. Allosteric regulation. Involved in synthesis of starch. Catalyzes the synthesis of ADP-glucose, a molecule that serves as an activated glycosyl donor for alpha-1,4-glucan synthesis. Essential for starch synthesis in leaf chloroplasts and endosperm amyloplasts. In Oryza sativa subsp. japonica (Rice), this protein is Glucose-1-phosphate adenylyltransferase large subunit 1, chloroplastic/amyloplastic.